The chain runs to 160 residues: Phosphopantetheine adenylyltransferase (160 aa).

Residue T10 participates in substrate binding. ATP is bound by residues 10–11 (TF) and H18. Substrate-binding residues include K42, M74, and R88. Residues 89–91 (GLR), E99, and 124–130 (LSFLSSS) contribute to the ATP site.

It belongs to the bacterial CoaD family. As to quaternary structure, homohexamer. The cofactor is Mg(2+).

Its subcellular location is the cytoplasm. The catalysed reaction is (R)-4'-phosphopantetheine + ATP + H(+) = 3'-dephospho-CoA + diphosphate. It participates in cofactor biosynthesis; coenzyme A biosynthesis; CoA from (R)-pantothenate: step 4/5. Its function is as follows. Reversibly transfers an adenylyl group from ATP to 4'-phosphopantetheine, yielding dephospho-CoA (dPCoA) and pyrophosphate. The protein is Phosphopantetheine adenylyltransferase of Photorhabdus laumondii subsp. laumondii (strain DSM 15139 / CIP 105565 / TT01) (Photorhabdus luminescens subsp. laumondii).